The following is a 278-amino-acid chain: Rhomboid protease GlpG (278 aa).

6 helical membrane passes run 95–115 (GPLT…MQIV), 143–163 (AFLH…WYLA), 170–190 (LGTG…GWGQ), 192–212 (LFSG…MGYV), 224–241 (ISLP…LVAG), and 245–267 (ILGL…LMAF). S202 (nucleophile) is an active-site residue. Residue H255 is part of the active site.

Belongs to the peptidase S54 family.

The protein localises to the cell inner membrane. It catalyses the reaction Cleaves type-1 transmembrane domains using a catalytic dyad composed of serine and histidine that are contributed by different transmembrane domains.. Rhomboid-type serine protease that catalyzes intramembrane proteolysis. The polypeptide is Rhomboid protease GlpG (Yersinia enterocolitica serotype O:8 / biotype 1B (strain NCTC 13174 / 8081)).